The sequence spans 127 residues: Small ribosomal subunit protein uS13 (127 aa).

Positions 97 to 127 (PVRGQRTRTNARTRRGGRKTVAGKKKAAAKK) are disordered. A compositionally biased stretch (basic residues) spans 101 to 127 (QRTRTNARTRRGGRKTVAGKKKAAAKK).

This sequence belongs to the universal ribosomal protein uS13 family. In terms of assembly, part of the 30S ribosomal subunit. Forms a loose heterodimer with protein S19. Forms two bridges to the 50S subunit in the 70S ribosome.

Its function is as follows. Located at the top of the head of the 30S subunit, it contacts several helices of the 16S rRNA. In the 70S ribosome it contacts the 23S rRNA (bridge B1a) and protein L5 of the 50S subunit (bridge B1b), connecting the 2 subunits; these bridges are implicated in subunit movement. Contacts the tRNAs in the A and P-sites. The polypeptide is Small ribosomal subunit protein uS13 (Gloeobacter violaceus (strain ATCC 29082 / PCC 7421)).